The primary structure comprises 465 residues: Siroheme synthase (465 aa).

The segment at 1-203 (MDFLPLFHSL…GRPAEAERLL (203 aa)) is precorrin-2 dehydrogenase /sirohydrochlorin ferrochelatase. NAD(+) is bound by residues 22 to 23 (EV) and 43 to 44 (PQ). Ser-128 is modified (phosphoserine). Residues 217 to 465 (GEVYLVGAGP…AWFEGAREDA (249 aa)) are uroporphyrinogen-III C-methyltransferase. An S-adenosyl-L-methionine-binding site is contributed by Pro-226. Asp-249 serves as the catalytic Proton acceptor. Lys-271 serves as the catalytic Proton donor. Residues 302–304 (GGD), Ile-307, 332–333 (TA), Met-384, and Gly-413 contribute to the S-adenosyl-L-methionine site.

It in the N-terminal section; belongs to the precorrin-2 dehydrogenase / sirohydrochlorin ferrochelatase family. This sequence in the C-terminal section; belongs to the precorrin methyltransferase family.

It carries out the reaction uroporphyrinogen III + 2 S-adenosyl-L-methionine = precorrin-2 + 2 S-adenosyl-L-homocysteine + H(+). The enzyme catalyses precorrin-2 + NAD(+) = sirohydrochlorin + NADH + 2 H(+). It catalyses the reaction siroheme + 2 H(+) = sirohydrochlorin + Fe(2+). It participates in cofactor biosynthesis; adenosylcobalamin biosynthesis; precorrin-2 from uroporphyrinogen III: step 1/1. Its pathway is cofactor biosynthesis; adenosylcobalamin biosynthesis; sirohydrochlorin from precorrin-2: step 1/1. The protein operates within porphyrin-containing compound metabolism; siroheme biosynthesis; precorrin-2 from uroporphyrinogen III: step 1/1. It functions in the pathway porphyrin-containing compound metabolism; siroheme biosynthesis; siroheme from sirohydrochlorin: step 1/1. It participates in porphyrin-containing compound metabolism; siroheme biosynthesis; sirohydrochlorin from precorrin-2: step 1/1. In terms of biological role, multifunctional enzyme that catalyzes the SAM-dependent methylations of uroporphyrinogen III at position C-2 and C-7 to form precorrin-2 via precorrin-1. Then it catalyzes the NAD-dependent ring dehydrogenation of precorrin-2 to yield sirohydrochlorin. Finally, it catalyzes the ferrochelation of sirohydrochlorin to yield siroheme. The chain is Siroheme synthase from Pseudomonas aeruginosa (strain ATCC 15692 / DSM 22644 / CIP 104116 / JCM 14847 / LMG 12228 / 1C / PRS 101 / PAO1).